The chain runs to 328 residues: Adenosine receptor A1 (328 aa).

Residues 1 to 10 (MPPSISAFQA) are Extracellular-facing. Residues 11–33 (AYIGIEVLIALVSVPGNVLVIWA) form a helical membrane-spanning segment. Over 34–46 (VKVNQALRDATFC) the chain is Cytoplasmic. The chain crosses the membrane as a helical span at residues 47–69 (FIVSLAVADVAVGALVIPLAILI). At 70–80 (NIGPETYFHTC) the chain is on the extracellular side. A disulfide bond links C80 and C169. A helical transmembrane segment spans residues 81–102 (LMVACPVLILTQSSILALLAIA). At 103–123 (VDRYLRVKIPLRYKAVVTPRR) the chain is on the cytoplasmic side. The chain crosses the membrane as a helical span at residues 124-146 (AAVAIAGCWILSLVVGLTPMFGW). The Extracellular portion of the chain corresponds to 147–176 (NNLREVQRAWAANGSVGEPVIKCEFEKVIS). N159 carries N-linked (GlcNAc...) asparagine glycosylation. Residues 177 to 201 (MEYMVYFNFFVWVLPPLLLMVLIYL) form a helical membrane-spanning segment. The Cytoplasmic segment spans residues 202 to 235 (EVFYLIRRQLSKKASASSGDPHKYYGKELKIAKS). Residues 236–259 (LALILFLFALSWLPLHILNCVTLF) traverse the membrane as a helical segment. The Extracellular portion of the chain corresponds to 260–267 (CPSCQKPS). Residues 268-292 (ILVYTAIFLTHGNSAMNPIVYAFRI) traverse the membrane as a helical segment. Over 293 to 328 (HKFRVTFLKIWNDHFRCRPAPAGDGDEDLPEEKPND) the chain is Cytoplasmic. The S-palmitoyl cysteine moiety is linked to residue C309.

The protein belongs to the G-protein coupled receptor 1 family.

Its subcellular location is the cell membrane. Its function is as follows. Receptor for adenosine. The activity of this receptor is mediated by G proteins which inhibit adenylyl cyclase. In Oryctolagus cuniculus (Rabbit), this protein is Adenosine receptor A1 (ADORA1).